A 156-amino-acid polypeptide reads, in one-letter code: Small ribosomal subunit protein uS7 (156 aa).

It belongs to the universal ribosomal protein uS7 family. In terms of assembly, part of the 30S ribosomal subunit. Contacts proteins S9 and S11.

One of the primary rRNA binding proteins, it binds directly to 16S rRNA where it nucleates assembly of the head domain of the 30S subunit. Is located at the subunit interface close to the decoding center, probably blocks exit of the E-site tRNA. The protein is Small ribosomal subunit protein uS7 of Novosphingobium aromaticivorans (strain ATCC 700278 / DSM 12444 / CCUG 56034 / CIP 105152 / NBRC 16084 / F199).